A 233-amino-acid chain; its full sequence is Eosinophil granule major basic protein 1 (233 aa).

Positions 1-15 (MKLLLLLALLLGAVS) are cleaved as a signal peptide. The propeptide at 16–114 (TRHLKVDTSS…VKFFSRPGYK (99 aa)) is acidic. Residues 24 to 96 (SSLQSLRGEE…SELDVSPEDI (73 aa)) form a disordered region. Residues 42 to 57 (AEGATREATAGALMPL) are compositionally biased toward low complexity. The span at 58–93 (PEEEEMEGASGSEDDPEEEEEEEEEVEFSSELDVSP) shows a compositional bias: acidic residues. Residues 132-233 (WVCQRCYRGN…GKRRPFVCTY (102 aa)) form the C-type lectin domain. Cystine bridges form between Cys134-Cys231 and Cys208-Cys223.

Post-translationally, nitrated.

The protein resides in the cytoplasmic granule. Its function is as follows. MBP may play some important roles in the allergic reactions and inflammations, since MBP is capable of releasing histamine from mast cells and damaging the epithelial cells of bronchial tubes. Antiparasitic and antibiotic. The protein is Eosinophil granule major basic protein 1 (MBP1) of Cavia porcellus (Guinea pig).